The chain runs to 171 residues: Adenine phosphoribosyltransferase (171 aa).

Belongs to the purine/pyrimidine phosphoribosyltransferase family. In terms of assembly, homodimer.

The protein localises to the cytoplasm. It carries out the reaction AMP + diphosphate = 5-phospho-alpha-D-ribose 1-diphosphate + adenine. It participates in purine metabolism; AMP biosynthesis via salvage pathway; AMP from adenine: step 1/1. Catalyzes a salvage reaction resulting in the formation of AMP, that is energically less costly than de novo synthesis. In Geotalea uraniireducens (strain Rf4) (Geobacter uraniireducens), this protein is Adenine phosphoribosyltransferase.